Consider the following 956-residue polypeptide: DNA repair endonuclease UVH1 (956 aa).

Residues arginine 256–glutamine 272 carry the Nuclear localization signal motif. Disordered regions lie at residues histidine 343–alanine 363, threonine 516–glycine 593, and serine 697–lysine 718. A compositionally biased stretch (polar residues) spans serine 697 to threonine 711. The ERCC4 domain maps to glutamine 725–glutamine 805.

Belongs to the XPF family. As to quaternary structure, heterodimer with ERCC1/RAD10. Isoform 1 and isoform 2 are widely expressed, predominantly in flowers, meristems and stems. Isoform 3 is detected at low levels.

It localises to the nucleus. Functionally, seems to be involved in nucleotide excision repair (NER) of damaged DNA (dark repair mechanism). Involved in repair of UV light, and probably oxidative damage. The UVH1/RAD1-ERCC1/RAD10 complex may act as an endonuclease making DNA incision 5' to the lesion site. In vitro, is implicated in double strand breaks (DSBs) repair and is required for homologous recombination in the presence of non-homologous overhangs. May mediate the induction of a DNA-damage sensitive cell-cycle checkpoint during the G2 phase. This chain is DNA repair endonuclease UVH1 (UVH1), found in Arabidopsis thaliana (Mouse-ear cress).